We begin with the raw amino-acid sequence, 407 residues long: Transmembrane protein 184B (407 aa).

Residues 1 to 24 are disordered; it reads MTVRGAALAPDPASPTTAAASPSI. Helical transmembrane passes span 40–60, 84–104, 121–141, 178–198, 214–234, 249–269, and 290–310; these read FLMT…ALLI, ILFI…FFTN, LVIY…SSIM, LQFC…QAFG, VTII…LFYF, FFMV…LAIL, and VAAG…ALAL. A disordered region spans residues 369-395; the sequence is TLEPGPTWRGGAHGLSRSHSLSGARDN. S388, S402, and S403 each carry phosphoserine.

This sequence belongs to the TMEM184 family.

The protein localises to the membrane. May activate the MAP kinase signaling pathway. This chain is Transmembrane protein 184B (TMEM184B), found in Bos taurus (Bovine).